Here is a 209-residue protein sequence, read N- to C-terminus: Dual specificity protein phosphatase 22 (209 aa).

The Tyrosine-protein phosphatase domain occupies 4–144 (GMNKILTGLF…LEDFGKCEVH (141 aa)). The active-site Phosphocysteine intermediate is the Cys88. Residues 169–192 (LDKHKQQEAAESQNATSSGRQWNS) form a disordered region. Residues 177-190 (AAESQNATSSGRQW) show a composition bias toward polar residues.

This sequence belongs to the protein-tyrosine phosphatase family. Non-receptor class dual specificity subfamily.

It is found in the cytoplasm. The protein resides in the nucleus. The catalysed reaction is O-phospho-L-tyrosyl-[protein] + H2O = L-tyrosyl-[protein] + phosphate. It carries out the reaction O-phospho-L-seryl-[protein] + H2O = L-seryl-[protein] + phosphate. It catalyses the reaction O-phospho-L-threonyl-[protein] + H2O = L-threonyl-[protein] + phosphate. Its function is as follows. Activates the Jnk signaling pathway. Dephosphorylates and deactivates p38 and stress-activated protein kinase/c-Jun N-terminal kinase (SAPK/JNK). In Xenopus laevis (African clawed frog), this protein is Dual specificity protein phosphatase 22 (dusp22).